Here is a 345-residue protein sequence, read N- to C-terminus: 2-oxoglutarate-dependent ethylene/succinate-forming enzyme (345 aa).

Residues 167–288 (GWHHMRVLRF…RFAMAYFHEP (122 aa)) enclose the Fe2OG dioxygenase domain. Fe cation is bound by residues His-191 and His-270.

The protein belongs to the iron/ascorbate-dependent oxidoreductase family. As to quaternary structure, monomer. Fe(2+) is required as a cofactor.

The enzyme catalyses 2-oxoglutarate + O2 + 2 H(+) = ethene + 3 CO2 + H2O. It carries out the reaction L-arginine + 2-oxoglutarate + O2 = guanidine + L-glutamate 5-semialdehyde + succinate + CO2. The protein operates within alkene biosynthesis; ethylene biosynthesis via 2-oxoglutarate. Simultaneously catalyzes two reactions, namely formation of ethylene and of succinate from 2-oxoglutarate. This chain is 2-oxoglutarate-dependent ethylene/succinate-forming enzyme (efe), found in Ralstonia nicotianae (strain ATCC BAA-1114 / GMI1000) (Ralstonia solanacearum).